Reading from the N-terminus, the 224-residue chain is UPF0758 protein VV1_0825 (224 aa).

Positions methionine 1 to glycine 20 are disordered. Positions alanine 102–isoleucine 224 constitute an MPN domain. Zn(2+) contacts are provided by histidine 173, histidine 175, and aspartate 186. Positions histidine 173–aspartate 186 match the JAMM motif motif.

This sequence belongs to the UPF0758 family.

The sequence is that of UPF0758 protein VV1_0825 from Vibrio vulnificus (strain CMCP6).